Reading from the N-terminus, the 513-residue chain is Glucose-6-phosphate 1-dehydrogenase 2 (513 aa).

A2 carries the post-translational modification N-acetylalanine. A Phosphoserine modification is found at S8. T10 carries the post-translational modification Phosphothreonine. NADP(+) is bound by residues G38–K45 and R72. N6-acetyllysine is present on K89. NADP(+)-binding residues include Y147 and K171. D-glucose 6-phosphate contacts are provided by residues K171, H201–K205, E239, and D258. At K171 the chain carries N6-(2-hydroxyisobutyryl)lysine; alternate. K171 bears the N6-acetyllysine; alternate mark. The active-site Proton acceptor is H263. Residue R357 coordinates NADP(+). D-glucose 6-phosphate-binding residues include K360 and R365. Positions 366, 370, and 393 each coordinate NADP(+). Residue Q395 participates in D-glucose 6-phosphate binding. Position 421–423 (D421–T423) interacts with NADP(+). K432 is subject to N6-acetyllysine. NADP(+) is bound by residues R487 and Y503. A Phosphotyrosine modification is found at Y503.

This sequence belongs to the glucose-6-phosphate dehydrogenase family. As to quaternary structure, homotetramer; dimer of dimers. Interacts with SIRT2; the interaction is enhanced by H(2)O(2) treatment. Acetylated by ELP3; acetylation inhibits its homodimerization and enzyme activity. Deacetylated by SIRT2; deacetylation stimulates its enzyme activity. In terms of tissue distribution, testis.

The protein resides in the cytoplasm. It localises to the cytosol. The protein localises to the membrane. It carries out the reaction D-glucose 6-phosphate + NADP(+) = 6-phospho-D-glucono-1,5-lactone + NADPH + H(+). It functions in the pathway carbohydrate degradation; pentose phosphate pathway; D-ribulose 5-phosphate from D-glucose 6-phosphate (oxidative stage): step 1/3. Its function is as follows. Catalyzes the rate-limiting step of the oxidative pentose-phosphate pathway, which represents a route for the dissimilation of carbohydrates besides glycolysis. The main function of this enzyme is to provide reducing power (NADPH) and pentose phosphates for fatty acid and nucleic acid synthesis. This chain is Glucose-6-phosphate 1-dehydrogenase 2 (G6pd2), found in Mus musculus (Mouse).